A 389-amino-acid polypeptide reads, in one-letter code: Galactokinase (389 aa).

34 to 37 (EHTD) is a substrate binding site. Residues Ser-68 and 125-131 (GSGLSSS) contribute to the ATP site. Ser-131 and Glu-163 together coordinate Mg(2+). Catalysis depends on Asp-175, which acts as the Proton acceptor. Tyr-225 is a binding site for substrate.

It belongs to the GHMP kinase family. GalK subfamily.

It localises to the cytoplasm. It catalyses the reaction alpha-D-galactose + ATP = alpha-D-galactose 1-phosphate + ADP + H(+). It participates in carbohydrate metabolism; galactose metabolism. Catalyzes the transfer of the gamma-phosphate of ATP to D-galactose to form alpha-D-galactose-1-phosphate (Gal-1-P). In Clostridium beijerinckii (strain ATCC 51743 / NCIMB 8052) (Clostridium acetobutylicum), this protein is Galactokinase.